A 469-amino-acid polypeptide reads, in one-letter code: Ubiquitin carboxyl-terminal hydrolase MINDY-1 (469 aa).

Positions 1–85 (MEHHQPEDPA…APPGPTLGTL (85 aa)) are disordered. Over residues 34–53 (HPQDTDARDADGEAGEREPA) the composition is skewed to basic and acidic residues. Residue serine 103 is modified to Phosphoserine. Residue cysteine 137 is the Nucleophile of the active site. Histidine 319 serves as the catalytic Proton acceptor. A ubiquitin-binding domain (UBD) region spans residues 388–426 (QVDQDYLIALSLQQQQPRGTLGLTDLELAQQLQQEEYQQ). Positions 428-469 (QAAQPVWMRTRALSPQGRGATSGRPAGERRQRPKHESDCILL) are disordered. At serine 441 the chain carries Phosphoserine. The span at 453 to 469 (AGERRQRPKHESDCILL) shows a compositional bias: basic and acidic residues.

This sequence belongs to the MINDY deubiquitinase family. FAM63 subfamily.

The enzyme catalyses Thiol-dependent hydrolysis of ester, thioester, amide, peptide and isopeptide bonds formed by the C-terminal Gly of ubiquitin (a 76-residue protein attached to proteins as an intracellular targeting signal).. Hydrolase that can specifically remove 'Lys-48'-linked conjugated ubiquitin from proteins. Has exodeubiquitinase activity and has a preference for long polyubiquitin chains. May play a regulatory role at the level of protein turnover. In Pongo abelii (Sumatran orangutan), this protein is Ubiquitin carboxyl-terminal hydrolase MINDY-1 (MINDY1).